We begin with the raw amino-acid sequence, 428 residues long: Glutamate-1-semialdehyde 2,1-aminomutase (428 aa).

Lysine 265 bears the N6-(pyridoxal phosphate)lysine mark.

Belongs to the class-III pyridoxal-phosphate-dependent aminotransferase family. HemL subfamily. Homodimer. It depends on pyridoxal 5'-phosphate as a cofactor.

Its subcellular location is the cytoplasm. It carries out the reaction (S)-4-amino-5-oxopentanoate = 5-aminolevulinate. It participates in porphyrin-containing compound metabolism; protoporphyrin-IX biosynthesis; 5-aminolevulinate from L-glutamyl-tRNA(Glu): step 2/2. The sequence is that of Glutamate-1-semialdehyde 2,1-aminomutase from Shewanella woodyi (strain ATCC 51908 / MS32).